The primary structure comprises 475 residues: Sulfate adenylyltransferase subunit 1 (475 aa).

One can recognise a tr-type G domain in the interval 25-239; that stretch reads KSLLRFLTCG…EVLETVEIQR (215 aa). The G1 stretch occupies residues 34–41; that stretch reads GSVDDGKS. 34–41 contributes to the GTP binding site; that stretch reads GSVDDGKS. The segment at 92–96 is G2; sequence GITID. The G3 stretch occupies residues 113-116; the sequence is DTPG. Residues 113–117 and 168–171 contribute to the GTP site; these read DTPGH and NKMD. Residues 168–171 form a G4 region; that stretch reads NKMD. Positions 206-208 are G5; the sequence is SAL.

It belongs to the TRAFAC class translation factor GTPase superfamily. Classic translation factor GTPase family. CysN/NodQ subfamily. Heterodimer composed of CysD, the smaller subunit, and CysN.

It catalyses the reaction sulfate + ATP + H(+) = adenosine 5'-phosphosulfate + diphosphate. It functions in the pathway sulfur metabolism; hydrogen sulfide biosynthesis; sulfite from sulfate: step 1/3. Its function is as follows. With CysD forms the ATP sulfurylase (ATPS) that catalyzes the adenylation of sulfate producing adenosine 5'-phosphosulfate (APS) and diphosphate, the first enzymatic step in sulfur assimilation pathway. APS synthesis involves the formation of a high-energy phosphoric-sulfuric acid anhydride bond driven by GTP hydrolysis by CysN coupled to ATP hydrolysis by CysD. The sequence is that of Sulfate adenylyltransferase subunit 1 from Escherichia coli O17:K52:H18 (strain UMN026 / ExPEC).